Here is a 207-residue protein sequence, read N- to C-terminus: GTP cyclohydrolase 1 (207 aa).

Zn(2+) is bound by residues C94, H97, and C167.

Belongs to the GTP cyclohydrolase I family. Toroid-shaped homodecamer, composed of two pentamers of five dimers.

The catalysed reaction is GTP + H2O = 7,8-dihydroneopterin 3'-triphosphate + formate + H(+). It functions in the pathway cofactor biosynthesis; 7,8-dihydroneopterin triphosphate biosynthesis; 7,8-dihydroneopterin triphosphate from GTP: step 1/1. This chain is GTP cyclohydrolase 1, found in Thermobifida fusca (strain YX).